The following is a 444-amino-acid chain: Beta-D-glucosyl crocetin beta-1,6-glucosyltransferase (444 aa).

His9 (proton acceptor) is an active-site residue. An anthocyanidin is bound at residue His9. Asp108 serves as the catalytic Charge relay. UDP-alpha-D-glucose is bound by residues Thr130, Ala319, Gln321, His336, Trp339, Asn340, Ser341, Glu344, Asp360, and Gln361.

It belongs to the UDP-glycosyltransferase family. In terms of tissue distribution, ubiquitous.

The catalysed reaction is beta-D-glucosyl crocetin + UDP-alpha-D-glucose = beta-D-gentiobiosyl crocetin + UDP + H(+). It carries out the reaction bis(beta-D-glucosyl) crocetin + UDP-alpha-D-glucose = beta-D-gentiobiosyl beta-D-glucosyl crocetin + UDP + H(+). The enzyme catalyses beta-D-gentiobiosyl beta-D-glucosyl crocetin + UDP-alpha-D-glucose = bis(beta-D-gentiobiosyl) crocetin + UDP + H(+). In terms of biological role, glucosyltransferase catalyzing the beta 1-6 glucosylation of the sugar moiety of crocetin glucosyl esters to produce crocetin gentiobiosyl esters. Weak activity toward curcumin glucosides, but no activity with flavonoid glucosides, coumarin glucosides, 4-nitrophenyl glucoside or crocetin. Involved with UGT75L6 in sequential glycosylation of crocetin to crocin (bis(beta-D-gentiobiosyl) crocetin). This Gardenia jasminoides (Cape jasmine) protein is Beta-D-glucosyl crocetin beta-1,6-glucosyltransferase (UGT94E5).